An 806-amino-acid polypeptide reads, in one-letter code: Leucine--tRNA ligase (806 aa).

The 'HIGH' region motif lies at 54-64 (SYPSGDLHMGH). The 'KMSKS' region motif lies at 571–575 (KMSKS). Residue Lys574 coordinates ATP.

This sequence belongs to the class-I aminoacyl-tRNA synthetase family.

The protein resides in the cytoplasm. It carries out the reaction tRNA(Leu) + L-leucine + ATP = L-leucyl-tRNA(Leu) + AMP + diphosphate. This is Leucine--tRNA ligase from Tropheryma whipplei (strain Twist) (Whipple's bacillus).